The chain runs to 62 residues: MKASELKNKSMEELTAKAAELSQELFNLRFQLHTGRLENTAKISSVKKDIARIKTILSEKRG.

It belongs to the universal ribosomal protein uL29 family.

This chain is Large ribosomal subunit protein uL29, found in Geobacter sulfurreducens (strain ATCC 51573 / DSM 12127 / PCA).